Reading from the N-terminus, the 106-residue chain is Thioredoxin (106 aa).

The Thioredoxin domain maps to 1 to 106 (GATVKVTNAT…RLAAFLDASL (106 aa)). The cysteines at positions 31 and 34 are disulfide-linked.

Belongs to the thioredoxin family.

Its function is as follows. Participates in various redox reactions through the reversible oxidation of its active center dithiol to a disulfide and catalyzes dithiol-disulfide exchange reactions. This is Thioredoxin (trxA) from Kitasatospora aureofaciens (Streptomyces aureofaciens).